The chain runs to 631 residues: UvrABC system protein C (631 aa).

The region spanning 26-105 (SSPGVYQFKN…IKELKPRYNV (80 aa)) is the GIY-YIG domain. The UVR domain occupies 219–254 (SATIRSLNERMLSFAKELKFEQAAELKTQIDSLKRY).

It belongs to the UvrC family. In terms of assembly, interacts with UvrB in an incision complex.

It localises to the cytoplasm. In terms of biological role, the UvrABC repair system catalyzes the recognition and processing of DNA lesions. UvrC both incises the 5' and 3' sides of the lesion. The N-terminal half is responsible for the 3' incision and the C-terminal half is responsible for the 5' incision. The chain is UvrABC system protein C from Chlorobium phaeobacteroides (strain DSM 266 / SMG 266 / 2430).